Consider the following 701-residue polypeptide: Glycine--tRNA ligase beta subunit (701 aa).

This sequence belongs to the class-II aminoacyl-tRNA synthetase family. In terms of assembly, tetramer of two alpha and two beta subunits.

It is found in the cytoplasm. The enzyme catalyses tRNA(Gly) + glycine + ATP = glycyl-tRNA(Gly) + AMP + diphosphate. The sequence is that of Glycine--tRNA ligase beta subunit from Helicobacter pylori (strain HPAG1).